The sequence spans 1070 residues: RecBCD enzyme subunit RecC (1070 aa).

The protein belongs to the RecC family. In terms of assembly, heterotrimer of RecB, RecC and RecD. All subunits contribute to DNA-binding.

In terms of biological role, a helicase/nuclease that prepares dsDNA breaks (DSB) for recombinational DNA repair. Binds to DSBs and unwinds DNA via a highly rapid and processive ATP-dependent bidirectional helicase activity. Unwinds dsDNA until it encounters a Chi (crossover hotspot instigator) sequence from the 3' direction. Cuts ssDNA a few nucleotides 3' to the Chi site. The properties and activities of the enzyme are changed at Chi. The Chi-altered holoenzyme produces a long 3'-ssDNA overhang and facilitates RecA-binding to the ssDNA for homologous DNA recombination and repair. Holoenzyme degrades any linearized DNA that is unable to undergo homologous recombination. In the holoenzyme this subunit recognizes the wild-type Chi sequence, and when added to isolated RecB increases its ATP-dependent helicase processivity. The protein is RecBCD enzyme subunit RecC of Buchnera aphidicola subsp. Acyrthosiphon pisum (strain APS) (Acyrthosiphon pisum symbiotic bacterium).